We begin with the raw amino-acid sequence, 184 residues long: Guanylate kinase (184 aa).

Residues 5–183 (KKLIIITGPS…TVKEVLKIIK (179 aa)) form the Guanylate kinase-like domain. 12–19 (GPSGVGKG) is a binding site for ATP.

The protein belongs to the guanylate kinase family.

It localises to the cytoplasm. It carries out the reaction GMP + ATP = GDP + ADP. Its function is as follows. Essential for recycling GMP and indirectly, cGMP. This Prochlorococcus marinus subsp. pastoris (strain CCMP1986 / NIES-2087 / MED4) protein is Guanylate kinase.